A 102-amino-acid polypeptide reads, in one-letter code: MIPGEILTEPGQIELNVGRPTLTIAVVNEDDRPIQVGSHYHFAEANNALVFDRELATGYRLNIPAGNAVRFEPGMRRTVELVAVGGERRIFGFQGKVMGALK.

The protein belongs to the urease beta subunit family. In terms of assembly, heterotrimer of UreA (gamma), UreB (beta) and UreC (alpha) subunits. Three heterotrimers associate to form the active enzyme.

Its subcellular location is the cytoplasm. The catalysed reaction is urea + 2 H2O + H(+) = hydrogencarbonate + 2 NH4(+). The protein operates within nitrogen metabolism; urea degradation; CO(2) and NH(3) from urea (urease route): step 1/1. This is Urease subunit beta from Bordetella pertussis (strain Tohama I / ATCC BAA-589 / NCTC 13251).